We begin with the raw amino-acid sequence, 173 residues long: Glucagon family neuropeptides (173 aa).

The first 22 residues, 1–22 (MSSKATLALLIYGIIMHYSVYS), serve as a signal peptide directing secretion. The propeptide occupies 23–80 (SPLGLNYPNLRLENEVYDEDGNSLPALAFDSDQIAIRSPPSVADDLYTLYYPPEKGTE). Position 166 is a lysine amide (lysine 166). Positions 170–173 (LGYL) are excised as a propeptide.

This sequence belongs to the glucagon family.

Its subcellular location is the secreted. In terms of biological role, primary role of GHRH is to release GH from the pituitary. Its function is as follows. PACAP plays pivotal roles as a neurotransmitter and/or a neuromodulator. This is Glucagon family neuropeptides from Oncorhynchus nerka (Sockeye salmon).